Consider the following 279-residue polypeptide: 3-methyl-2-oxobutanoate hydroxymethyltransferase (279 aa).

Mg(2+) is bound by residues aspartate 43 and aspartate 82. Residues 43 to 44 (DS), aspartate 82, and lysine 112 each bind 3-methyl-2-oxobutanoate. Glutamate 114 lines the Mg(2+) pocket. Catalysis depends on glutamate 181, which acts as the Proton acceptor.

It belongs to the PanB family. As to quaternary structure, homodecamer; pentamer of dimers. Mg(2+) serves as cofactor.

Its subcellular location is the cytoplasm. It carries out the reaction 3-methyl-2-oxobutanoate + (6R)-5,10-methylene-5,6,7,8-tetrahydrofolate + H2O = 2-dehydropantoate + (6S)-5,6,7,8-tetrahydrofolate. Its pathway is cofactor biosynthesis; (R)-pantothenate biosynthesis; (R)-pantoate from 3-methyl-2-oxobutanoate: step 1/2. Its function is as follows. Catalyzes the reversible reaction in which hydroxymethyl group from 5,10-methylenetetrahydrofolate is transferred onto alpha-ketoisovalerate to form ketopantoate. This is 3-methyl-2-oxobutanoate hydroxymethyltransferase from Lysinibacillus sphaericus (strain C3-41).